The primary structure comprises 697 residues: Phenylalanine--tRNA ligase beta subunit, chloroplastic (697 aa).

Residues 283-368 (NISRILFIDK…RIYGFDNFIS (86 aa)) form the B5 domain. Mg(2+)-binding residues include D346, D352, E355, and E356. The region spanning 609-697 (SSYPSLTRDI…IDDLLNEYKL (89 aa)) is the FDX-ACB domain.

Belongs to the phenylalanyl-tRNA synthetase beta subunit family. Type 1 subfamily. In terms of assembly, tetramer of two alpha and two beta subunits. It depends on Mg(2+) as a cofactor.

It localises to the plastid. Its subcellular location is the chloroplast. The catalysed reaction is tRNA(Phe) + L-phenylalanine + ATP = L-phenylalanyl-tRNA(Phe) + AMP + diphosphate + H(+). This chain is Phenylalanine--tRNA ligase beta subunit, chloroplastic, found in Gracilaria tenuistipitata var. liui (Red alga).